Consider the following 301-residue polypeptide: Glycine--tRNA ligase alpha subunit (301 aa).

The protein belongs to the class-II aminoacyl-tRNA synthetase family. As to quaternary structure, tetramer of two alpha and two beta subunits.

It is found in the cytoplasm. It catalyses the reaction tRNA(Gly) + glycine + ATP = glycyl-tRNA(Gly) + AMP + diphosphate. The sequence is that of Glycine--tRNA ligase alpha subunit from Shewanella halifaxensis (strain HAW-EB4).